Here is a 201-residue protein sequence, read N- to C-terminus: Holliday junction branch migration complex subunit RuvA (201 aa).

Positions M1–T64 are domain I. The interval T65–E143 is domain II. The interval L144–S152 is flexible linker. The tract at residues D153 to R201 is domain III.

The protein belongs to the RuvA family. As to quaternary structure, homotetramer. Forms an RuvA(8)-RuvB(12)-Holliday junction (HJ) complex. HJ DNA is sandwiched between 2 RuvA tetramers; dsDNA enters through RuvA and exits via RuvB. An RuvB hexamer assembles on each DNA strand where it exits the tetramer. Each RuvB hexamer is contacted by two RuvA subunits (via domain III) on 2 adjacent RuvB subunits; this complex drives branch migration. In the full resolvosome a probable DNA-RuvA(4)-RuvB(12)-RuvC(2) complex forms which resolves the HJ.

Its subcellular location is the cytoplasm. In terms of biological role, the RuvA-RuvB-RuvC complex processes Holliday junction (HJ) DNA during genetic recombination and DNA repair, while the RuvA-RuvB complex plays an important role in the rescue of blocked DNA replication forks via replication fork reversal (RFR). RuvA specifically binds to HJ cruciform DNA, conferring on it an open structure. The RuvB hexamer acts as an ATP-dependent pump, pulling dsDNA into and through the RuvAB complex. HJ branch migration allows RuvC to scan DNA until it finds its consensus sequence, where it cleaves and resolves the cruciform DNA. The sequence is that of Holliday junction branch migration complex subunit RuvA from Clostridium perfringens (strain ATCC 13124 / DSM 756 / JCM 1290 / NCIMB 6125 / NCTC 8237 / Type A).